Consider the following 179-residue polypeptide: Apoptosis regulator DPV022 (179 aa).

A helical transmembrane segment spans residues 148–170 (VLITNYLKITIFGAILGITAYYI).

As to quaternary structure, interacts with host BAX and BAK1.

The protein localises to the host mitochondrion. It is found in the host membrane. Its function is as follows. Plays a role in the inhibition of host apoptosis by sequestering and inactivating several proapoptotic BCL-2 proteins, including BAK1 and BAX. Prevents the conformational activation of both of them. This Deerpox virus (strain Mule deer/United States/W-848-83/1983) (DPV) protein is Apoptosis regulator DPV022 (DPV022).